Here is a 956-residue protein sequence, read N- to C-terminus: Plasma membrane ATPase 1 (956 aa).

The Cytoplasmic portion of the chain corresponds to 1–65 (MAEKPEVLDA…EKKESKFLKF (65 aa)). Residues 66-85 (LGFMWNPLSWVMEAAAIMAI) form a helical membrane-spanning segment. Residues 86-97 (ALANGGGKPPDW) lie on the Extracellular side of the membrane. Residues 98 to 118 (QDFVGIITLLIINSTISFIEE) traverse the membrane as a helical segment. Residues 119–247 (NNAGNAAAAL…GHFQKVLTAI (129 aa)) are Cytoplasmic-facing. A helical transmembrane segment spans residues 248-268 (GNFCICSIAVGMIIEIIVMYP). Topologically, residues 269 to 277 (IQHRKYRPG) are extracellular. A helical membrane pass occupies residues 278–295 (IDNLLVLLIGGIPIAMPT). Topologically, residues 296 to 646 (VLSVTMAIGS…LTSRAIFQRM (351 aa)) are cytoplasmic. The active-site 4-aspartylphosphate intermediate is D333. Mg(2+) contacts are provided by D592 and D596. Residues 647-666 (KNYTIYAVSITIRIVLGFML) form a helical membrane-spanning segment. The Extracellular segment spans residues 667–674 (LALIWKFD). The helical transmembrane segment at 675–697 (FPPFMVLIIAILNDGTIMTISKD) threads the bilayer. Topologically, residues 698 to 713 (RVKPSPLPDSWKLAEI) are cytoplasmic. A helical membrane pass occupies residues 714–734 (FTTGVVLGGYLAMMTVIFFWA). The Extracellular portion of the chain corresponds to 735–759 (AYKTNFFPRIFGVSTLEKTATDDFR). A helical transmembrane segment spans residues 760-780 (KLASAIYLQVSTISQALIFVT). The Cytoplasmic portion of the chain corresponds to 781-792 (RSRSWSFVERPG). The chain crosses the membrane as a helical span at residues 793 to 813 (LLLVFAFFVAQLVATLIAVYA). Residues 814–821 (NWSFAAIE) are Extracellular-facing. Residues 822 to 842 (GIGWGWAGVIWLYNIVTYIPL) form a helical membrane-spanning segment. Residues 843 to 956 (DLIKFLIRYA…IETIQQSYTV (114 aa)) lie on the Cytoplasmic side of the membrane.

Belongs to the cation transport ATPase (P-type) (TC 3.A.3) family. Type IIIA subfamily. In terms of assembly, possibly exists as a homodimer or a homotrimer.

Its subcellular location is the cell membrane. It catalyses the reaction ATP + H2O + H(+)(in) = ADP + phosphate + 2 H(+)(out). Functionally, the plasma membrane ATPase of plants and fungi is a hydrogen ion pump. The proton gradient it generates drives the active transport of nutrients by H(+)-symport. The resulting external acidification and/or internal alkinization may mediate growth responses. This Solanum lycopersicum (Tomato) protein is Plasma membrane ATPase 1 (LHA1).